A 269-amino-acid polypeptide reads, in one-letter code: Tropinone reductase homolog At2g29320 (269 aa).

Position 19–43 (L19–H43) interacts with NADP(+). S152 is a substrate binding site. Y166 (proton acceptor) is an active-site residue.

It belongs to the short-chain dehydrogenases/reductases (SDR) family. SDR65C subfamily.

The sequence is that of Tropinone reductase homolog At2g29320 from Arabidopsis thaliana (Mouse-ear cress).